The chain runs to 488 residues: Alpha,alpha-trehalose-phosphate synthase [UDP-forming] 56 kDa subunit (488 aa).

Positions 102 and 156 each coordinate D-glucose 6-phosphate. Residues Arg-293 and Lys-298 each coordinate UDP. Arg-293 and Lys-298 together coordinate UDP-alpha-D-glucose. Arg-331 is a D-glucose 6-phosphate binding site. UDP contacts are provided by residues Ile-370 and Leu-396–Glu-400. Residues Ile-370 and Asp-392 to Glu-400 contribute to the UDP-alpha-D-glucose site.

It belongs to the glycosyltransferase 20 family. Trehalose synthase/phosphatase complex contains three or four polypeptides of 56 kDa (TPS1), 102 kDa (TPS2), 115 kDa (TPS3) and 123 kDa (TSL1).

The catalysed reaction is D-glucose 6-phosphate + UDP-alpha-D-glucose = alpha,alpha-trehalose 6-phosphate + UDP + H(+). It functions in the pathway carbohydrate biosynthesis. Its function is as follows. Synthase catalytic subunit of the trehalose synthase complex that catalyzes the production of trehalose from glucose-6-phosphate and UDP-alpha-D-glucose in a two step process. Can function independently of the complex. The sequence is that of Alpha,alpha-trehalose-phosphate synthase [UDP-forming] 56 kDa subunit from Kluyveromyces lactis (strain ATCC 8585 / CBS 2359 / DSM 70799 / NBRC 1267 / NRRL Y-1140 / WM37) (Yeast).